The sequence spans 240 residues: uncharacterized protein (240 aa).

This is an uncharacterized protein from Methanocaldococcus jannaschii (strain ATCC 43067 / DSM 2661 / JAL-1 / JCM 10045 / NBRC 100440) (Methanococcus jannaschii).